We begin with the raw amino-acid sequence, 233 residues long: Large ribosomal subunit protein uL1 (233 aa).

The protein belongs to the universal ribosomal protein uL1 family. In terms of assembly, part of the 50S ribosomal subunit.

Binds directly to 23S rRNA. The L1 stalk is quite mobile in the ribosome, and is involved in E site tRNA release. Functionally, protein L1 is also a translational repressor protein, it controls the translation of the L11 operon by binding to its mRNA. The polypeptide is Large ribosomal subunit protein uL1 (Shewanella sp. (strain MR-4)).